We begin with the raw amino-acid sequence, 239 residues long: Large ribosomal subunit protein uL1 (239 aa).

Belongs to the universal ribosomal protein uL1 family. In terms of assembly, part of the 50S ribosomal subunit.

In terms of biological role, binds directly to 23S rRNA. The L1 stalk is quite mobile in the ribosome, and is involved in E site tRNA release. Its function is as follows. Protein L1 is also a translational repressor protein, it controls the translation of the L11 operon by binding to its mRNA. This is Large ribosomal subunit protein uL1 from Rickettsia rickettsii (strain Iowa).